We begin with the raw amino-acid sequence, 391 residues long: Inhibin beta B chain (391 aa).

The signal sequence occupies residues 1–25 (MDGAARRGVLAALLACGLLLLGAAA). Residues 26-276 (TPTPPPAGSS…ADNKHRIRKR (251 aa)) constitute a propeptide that is removed on maturation. The disordered stretch occupies residues 27–47 (PTPPPAGSSPQDTCTSCGFRR). N-linked (GlcNAc...) asparagine glycosylation occurs at Asn77. Cystine bridges form between Cys280–Cys288, Cys287–Cys356, Cys316–Cys388, and Cys320–Cys390.

It belongs to the TGF-beta family. In terms of assembly, dimeric, linked by one or more disulfide bonds. Inhibin A is a dimer of alpha and beta-A. Inhibin B is a dimer of alpha and beta-B. Activin A is a homodimer of beta-A. Activin B is a homodimer of beta-B. Activin AB is a dimer of beta-A and beta-B.

It localises to the secreted. Functionally, inhibins and activins inhibit and activate, respectively, the secretion of follitropin by the pituitary gland. Inhibins/activins are involved in regulating a number of diverse functions such as hypothalamic and pituitary hormone secretion, gonadal hormone secretion, germ cell development and maturation, erythroid differentiation, insulin secretion, nerve cell survival, embryonic axial development or bone growth, depending on their subunit composition. Inhibins appear to oppose the functions of activins. The protein is Inhibin beta B chain (INHBB) of Gallus gallus (Chicken).